The following is a 353-amino-acid chain: GTPase Obg (353 aa).

The 159-residue stretch at 1–159 folds into the Obg domain; that stretch reads MKFLDEAKVY…RWIWLRLKLI (159 aa). In terms of domain architecture, OBG-type G spans 160-327; it reads ADAGLVGLPN…ALRALAAVIG (168 aa). Residues 166-173, 191-195, 212-215, 279-282, and 308-310 contribute to the GTP site; these read GLPNAGKS, FTTLH, DIPG, NKID, and SGI. Ser-173 and Thr-193 together coordinate Mg(2+). The segment at 332–353 is disordered; the sequence is SDKAKGAADNAANAEPWAPQDA.

The protein belongs to the TRAFAC class OBG-HflX-like GTPase superfamily. OBG GTPase family. In terms of assembly, monomer. The cofactor is Mg(2+).

The protein localises to the cytoplasm. Functionally, an essential GTPase which binds GTP, GDP and possibly (p)ppGpp with moderate affinity, with high nucleotide exchange rates and a fairly low GTP hydrolysis rate. Plays a role in control of the cell cycle, stress response, ribosome biogenesis and in those bacteria that undergo differentiation, in morphogenesis control. This Rhodopseudomonas palustris (strain HaA2) protein is GTPase Obg.